The chain runs to 312 residues: Ribosomal protein uL3 glutamine methyltransferase (312 aa).

Belongs to the protein N5-glutamine methyltransferase family. PrmB subfamily.

The enzyme catalyses L-glutaminyl-[ribosomal protein uL3] + S-adenosyl-L-methionine = N(5)-methyl-L-glutaminyl-[ribosomal protein uL3] + S-adenosyl-L-homocysteine + H(+). Its function is as follows. Methylates large ribosomal subunit protein uL3 on a specific glutamine residue. This is Ribosomal protein uL3 glutamine methyltransferase from Xylella fastidiosa (strain 9a5c).